Here is a 206-residue protein sequence, read N- to C-terminus: Small ribosomal subunit protein uS4 (206 aa).

An S4 RNA-binding domain is found at 96–157 (CRLDNVVYRM…KCRNQLRIAQ (62 aa)).

Belongs to the universal ribosomal protein uS4 family. Part of the 30S ribosomal subunit. Contacts protein S5. The interaction surface between S4 and S5 is involved in control of translational fidelity.

One of the primary rRNA binding proteins, it binds directly to 16S rRNA where it nucleates assembly of the body of the 30S subunit. Functionally, with S5 and S12 plays an important role in translational accuracy. In Stutzerimonas stutzeri (strain A1501) (Pseudomonas stutzeri), this protein is Small ribosomal subunit protein uS4.